A 161-amino-acid polypeptide reads, in one-letter code: Ribonuclease H (161 aa).

The region spanning 5-149 (EKLAIAAATD…VDAIAVAFSK (145 aa)) is the RNase H type-1 domain. Residues aspartate 14, glutamate 53, aspartate 78, and aspartate 141 each contribute to the Mg(2+) site.

It belongs to the RNase H family. As to quaternary structure, monomer. Requires Mg(2+) as cofactor.

It localises to the cytoplasm. It carries out the reaction Endonucleolytic cleavage to 5'-phosphomonoester.. In terms of biological role, endonuclease that specifically degrades the RNA of RNA-DNA hybrids. In Prochlorococcus marinus (strain NATL2A), this protein is Ribonuclease H.